Reading from the N-terminus, the 500-residue chain is MELQISSAIIILVVTYTISLLIIKQWRKPKPQENLPPGPPKLPLIGHLHLLWGKLPQHALASVAKQYGPVAHVQLGEVFSVVLSSREATKEAMKLVDPACADRFESIGTKIMWYDNDDIIFSPYSVHWRQMRKICVSELLSARNVRSFGFIRQDEVSRLLGHLRSSAAAGEAVDLTERIATLTCSIICRAAFGSVIRDHEELVELVKDALSMASGFELADMFPSSKLLNLLCWNKSKLWRMRRRVDAILEAIVEEHKLKKSGEFGGEDIIDVLFRMQKDSQIKVPITTNAIKAFIFDTFSAGTETSSTTTLWVMAELMRNPEVMAKAQAEVRAALKGKTDWDVDDVQELKYMKSVVKETMRMHPPIPLIPRSCREECEVNGYTIPNKARIMINVWSMGRNPLYWEKPETFWPERFDQVSRDFMGNDFEFIPFGAGRRICPGLNFGLANVEVPLAQLLYHFDWKLAEGMNPSDMDMSEAEGLTGIRKNNLLLVPTPYDPSS.

The helical; Signal-anchor for type II membrane protein transmembrane segment at 3–23 threads the bilayer; sequence LQISSAIIILVVTYTISLLII. Position 439 (Cys439) interacts with heme.

Belongs to the cytochrome P450 family. Heme is required as a cofactor.

Its subcellular location is the endoplasmic reticulum membrane. The catalysed reaction is (4S)-limonene + reduced [NADPH--hemoprotein reductase] + O2 = (1S,6R)-isopiperitenol + oxidized [NADPH--hemoprotein reductase] + H2O + H(+). In terms of biological role, hydroxylates (-)-(4S)-limonene to (-)-trans-isopiperitenol, a precursor of (-)-menthol, responsible for the cooling sensation of peppermint. The sequence is that of Cytochrome P450 71D13 (CYP71D13) from Mentha piperita (Peppermint).